Consider the following 306-residue polypeptide: D-alanine--D-alanine ligase (306 aa).

The region spanning 101–303 is the ATP-grasp domain; the sequence is KQVWQAVGLP…FSQLVVKILE (203 aa). 134-189 is an ATP binding site; the sequence is FTHLGLPLIVKPSREGSSVGMSKVNTLSELPAALEEAFRHDDDILVEKWLSGPEYT. Residues Asp-257, Glu-270, and Asn-272 each contribute to the Mg(2+) site.

This sequence belongs to the D-alanine--D-alanine ligase family. Mg(2+) is required as a cofactor. Mn(2+) serves as cofactor.

It localises to the cytoplasm. The catalysed reaction is 2 D-alanine + ATP = D-alanyl-D-alanine + ADP + phosphate + H(+). Its pathway is cell wall biogenesis; peptidoglycan biosynthesis. In terms of biological role, cell wall formation. This chain is D-alanine--D-alanine ligase, found in Pectobacterium carotovorum subsp. carotovorum (strain PC1).